The sequence spans 310 residues: Retrotransposon Gag-like protein 4 (310 aa).

The CCHC-type zinc finger occupies 278–295 (QLCLYCSQSGHFTRDCLA).

Its function is as follows. Involved in cognitive function in the brain, possibly via the noradrenergic system. In Homo sapiens (Human), this protein is Retrotransposon Gag-like protein 4.